We begin with the raw amino-acid sequence, 331 residues long: MTTTPRIAITPGEPAGIGPDLVVAVAQVPCAAQRVVLSDPALLRERARLLGLPLEIRPFDPQTPAAPDPAGCLTVMAHALNAPVRPGHLDTANARHVLATLESAVAGCLDGRFDALVTGPVHKGIINDAGIPFTGHTEFLAERSGAPTPVMLLAAGALRVALATTHLPLRAVADAITPAGLEHVLRVLNQDLKTKFAISEPRILVCGLNPHAGEGGHLGREEIEVIGPVLERLRTQGLHLIGPLPADTLFTPRHLEHADAILAMYHDQGLPVLKHAGFGRAVNITLGLPLIRTSVDHGTALELAGSGRAEAGSFMEAERLAIEMARSAHGL.

2 residues coordinate substrate: His136 and Thr137. A divalent metal cation contacts are provided by His166, His211, and His266. Positions 274, 283, and 292 each coordinate substrate.

The protein belongs to the PdxA family. Homodimer. Zn(2+) is required as a cofactor. Requires Mg(2+) as cofactor. Co(2+) serves as cofactor.

It is found in the cytoplasm. It carries out the reaction 4-(phosphooxy)-L-threonine + NAD(+) = 3-amino-2-oxopropyl phosphate + CO2 + NADH. Its pathway is cofactor biosynthesis; pyridoxine 5'-phosphate biosynthesis; pyridoxine 5'-phosphate from D-erythrose 4-phosphate: step 4/5. Catalyzes the NAD(P)-dependent oxidation of 4-(phosphooxy)-L-threonine (HTP) into 2-amino-3-oxo-4-(phosphooxy)butyric acid which spontaneously decarboxylates to form 3-amino-2-oxopropyl phosphate (AHAP). In Thioalkalivibrio sulfidiphilus (strain HL-EbGR7), this protein is 4-hydroxythreonine-4-phosphate dehydrogenase.